Reading from the N-terminus, the 391-residue chain is Argininosuccinate synthase (391 aa).

Residue 6-14 participates in ATP binding; it reads AYSGGLDTT. Tyr84 is an L-citrulline binding site. Residue Gly114 participates in ATP binding. Positions 116, 120, and 121 each coordinate L-aspartate. Asn120 provides a ligand contact to L-citrulline. L-citrulline contacts are provided by Arg124, Ser171, Ser180, Glu253, and Tyr265.

It belongs to the argininosuccinate synthase family. Type 1 subfamily. As to quaternary structure, homotetramer.

It localises to the cytoplasm. It catalyses the reaction L-citrulline + L-aspartate + ATP = 2-(N(omega)-L-arginino)succinate + AMP + diphosphate + H(+). The protein operates within amino-acid biosynthesis; L-arginine biosynthesis; L-arginine from L-ornithine and carbamoyl phosphate: step 2/3. The sequence is that of Argininosuccinate synthase from Saccharolobus solfataricus (strain ATCC 35092 / DSM 1617 / JCM 11322 / P2) (Sulfolobus solfataricus).